Reading from the N-terminus, the 181-residue chain is uncharacterized protein (181 aa).

The 141-residue stretch at 35–175 (LRHRCVFVWA…ARLRAWRGAS (141 aa)) folds into the Nudix hydrolase domain. The Nudix box signature appears at 72 to 94 (GGVVGAGESYDDAALREAEEELG). Residues glutamate 88 and glutamate 92 each contribute to the Mg(2+) site.

Belongs to the Nudix hydrolase family. Mg(2+) is required as a cofactor.

This is an uncharacterized protein from Streptomyces coelicolor (strain ATCC BAA-471 / A3(2) / M145).